The chain runs to 333 residues: Acetyltransferase Pat (333 aa).

3',5'-cyclic AMP contacts are provided by residues 85–88, 95–96, and Arg135; these read GEIA and RT. The N-acetyltransferase domain occupies 153-317; it reads FYLRPVLPGD…DTVPFEPELI (165 aa). Glu211 is a binding site for Mg(2+). Residues 237 to 239, 245 to 250, Asn276, and Arg285 contribute to the substrate site; these read FTV and GRGIGS.

As to quaternary structure, homodimer. The cofactor is Mg(2+).

With respect to regulation, allosterically regulated by cAMP. Its function is as follows. Catalyzes specifically the acetylation of the epsilon-amino group of a highly conserved lysine residue in acetyl-CoA synthetase (ACS) and of the universal stress protein (USP) MSMEG_4207. Acetylation results in the inactivation of ACS activity and could be important for mycobacteria to adjust to environmental changes. This chain is Acetyltransferase Pat, found in Mycolicibacterium smegmatis (strain ATCC 700084 / mc(2)155) (Mycobacterium smegmatis).